Reading from the N-terminus, the 568-residue chain is Transport inhibitor response 1-like protein Os11g0515500 (568 aa).

The F-box domain occupies 1-45 (MVFFPEEVVEHILGFLASHRDRNAVSLVCREWYRVERLSRRSVLV). Residues Lys69, 103–104 (KR), and Arg335 contribute to the 1D-myo-inositol hexakisphosphate site. The interaction with auxin-responsive proteins stretch occupies residues 338–343 (PANANA). 390 to 392 (SFR) is a 1D-myo-inositol hexakisphosphate binding site. The tract at residues 394–398 (CVLDP) is interaction with auxin-responsive proteins. 1D-myo-inositol hexakisphosphate is bound at residue Arg425. An interaction with auxin-responsive proteins region spans residues 453–454 (AF). 1D-myo-inositol hexakisphosphate is bound by residues 473–474 (KK) and Arg498.

Part of a SCF (SKP1-cullin-F-box) protein ligase complex. May interact with auxin and auxin-responsive proteins.

It is found in the nucleus. It functions in the pathway protein modification; protein ubiquitination. The sequence is that of Transport inhibitor response 1-like protein Os11g0515500 from Oryza sativa subsp. japonica (Rice).